Consider the following 349-residue polypeptide: Nicotinate-nucleotide--dimethylbenzimidazole phosphoribosyltransferase (349 aa).

Glutamate 318 acts as the Proton acceptor in catalysis.

This sequence belongs to the CobT family.

The enzyme catalyses 5,6-dimethylbenzimidazole + nicotinate beta-D-ribonucleotide = alpha-ribazole 5'-phosphate + nicotinate + H(+). Its pathway is nucleoside biosynthesis; alpha-ribazole biosynthesis; alpha-ribazole from 5,6-dimethylbenzimidazole: step 1/2. In terms of biological role, catalyzes the synthesis of alpha-ribazole-5'-phosphate from nicotinate mononucleotide (NAMN) and 5,6-dimethylbenzimidazole (DMB). The sequence is that of Nicotinate-nucleotide--dimethylbenzimidazole phosphoribosyltransferase from Geobacter sp. (strain M21).